We begin with the raw amino-acid sequence, 128 residues long: Sulfurtransferase TusD (128 aa).

The active-site Cysteine persulfide intermediate is the Cys-78.

The protein belongs to the DsrE/TusD family. In terms of assembly, heterohexamer, formed by a dimer of trimers. The hexameric TusBCD complex contains 2 copies each of TusB, TusC and TusD. The TusBCD complex interacts with TusE.

It is found in the cytoplasm. Functionally, part of a sulfur-relay system required for 2-thiolation of 5-methylaminomethyl-2-thiouridine (mnm(5)s(2)U) at tRNA wobble positions. Accepts sulfur from TusA and transfers it in turn to TusE. The polypeptide is Sulfurtransferase TusD (Shigella flexneri serotype 5b (strain 8401)).